We begin with the raw amino-acid sequence, 198 residues long: Snake venom metalloproteinase neuwiedase (198 aa).

The Peptidase M12B domain maps to 8-198 (RYIELVIVAD…QTFLTNHNPQ (191 aa)). Positions 11 and 95 each coordinate Ca(2+). H144 is a Zn(2+) binding site. E145 is an active-site residue. 2 residues coordinate Zn(2+): H148 and H154. Cystine bridges form between C159/C183 and C161/C166.

It belongs to the venom metalloproteinase (M12B) family. P-I subfamily. Requires Zn(2+) as cofactor. In terms of tissue distribution, expressed by the venom gland.

The protein localises to the secreted. Its activity is regulated as follows. Inhibited by EDTA, EGTA and 1,10-phenanthroline, partially inhibited by beta-mercaptoethanol and not inhibited by serine protease inhibitors (leupeptin and aprotinin). Also inhibited by an excess of zinc, mercury and magnesium ions. Extracts of the plant Casearia mariquitensis neutralizes the decrease of platelets and plasma fibrinogen induced by the protease. The same extracts also partially inhibit Bbeta chain cleavage, but not Aalpha chain cleavage. Functionally, this metalloprotease hydrolyzes the Aalpha chain of fibrin and fibrinogen first followed by the Bbeta chain and shows no effect on the gamma chain. It is also able to degrade type I collagen, fibronectin, laminin and induces inflammatory reaction. It is devoid of hemorrhagic and thrombotic activities, except in lung where it induces pulmonary bleeding. It also induces a mild myotoxic reaction. It is not able to inhibit platelet aggregation, but it induces decrease of platelets and plasma fibrinogen. It contributes to local tissue damage by inducing edema, inflammatory infiltrate and mild myotoxicity, and by degrading extracellular matrix components. The polypeptide is Snake venom metalloproteinase neuwiedase (Bothrops pauloensis (Neuwied's lancehead)).